The chain runs to 428 residues: Histidine--tRNA ligase (428 aa).

Belongs to the class-II aminoacyl-tRNA synthetase family. Homodimer.

It is found in the cytoplasm. It catalyses the reaction tRNA(His) + L-histidine + ATP = L-histidyl-tRNA(His) + AMP + diphosphate + H(+). The protein is Histidine--tRNA ligase of Mesomycoplasma hyopneumoniae (strain J / ATCC 25934 / NCTC 10110) (Mycoplasma hyopneumoniae).